Here is a 690-residue protein sequence, read N- to C-terminus: Eukaryotic translation initiation factor 3 subunit B (690 aa).

Positions 1 to 37 (MAKKKSEEQSSADANDSDYQEEPNFEDPPGFVDNISD) are disordered. A compositionally biased stretch (acidic residues) spans 15 to 25 (NDSDYQEEPNF). Positions 57–141 (SVVVVDNIPK…HTFAVNLFTD (85 aa)) constitute an RRM domain. 5 WD repeats span residues 207 to 246 (TRERFTDTFVKWSPLGTYVVTFHKPGVAIWGGSSFQKIQK), 293 to 331 (DGMSVLSMFRWSHDDKFVARMGENSIHIYETPSFYLLDL), 334 to 369 (IKIPGIRGFSWSPTDNVIAYWVEEQNQIPARVTLME), 442 to 484 (EIRE…KPSL), and 530 to 575 (PDHF…IKRT). Residues 595–645 (EEKQKEIKKNLKKYYAAFEQKDRLRLTRASKELLEKRSQLRETFMEYRNKR) are a coiled coil.

Belongs to the eIF-3 subunit B family. Component of the eukaryotic translation initiation factor 3 (eIF-3) complex. The eIF-3 complex interacts with pix. Interacts with mxt.

It localises to the cytoplasm. Its function is as follows. RNA-binding component of the eukaryotic translation initiation factor 3 (eIF-3) complex, which is involved in protein synthesis of a specialized repertoire of mRNAs and, together with other initiation factors, stimulates binding of mRNA and methionyl-tRNAi to the 40S ribosome. The eIF-3 complex specifically targets and initiates translation of a subset of mRNAs involved in cell proliferation. This Drosophila sechellia (Fruit fly) protein is Eukaryotic translation initiation factor 3 subunit B.